The following is a 740-amino-acid chain: Arf-GAP with coiled-coil, ANK repeat and PH domain-containing protein 1 (740 aa).

One can recognise a BAR domain in the interval 1 to 226; that stretch reads MTVKLDFEEC…RKELGAQLHQ (226 aa). The segment at 1 to 382 is required for formation of endosomal tubules when overexpressed with PIP5K1C; sequence MTVKLDFEEC…RGPGQGSGHL (382 aa). Residues 265-360 form the PH domain; the sequence is GLVMEGHLFK…WVSAVQSSIA (96 aa). An Arf-GAP domain is found at 405-527; sequence GHVVAQVQSV…KFLTKLPEIR (123 aa). The required for interaction with GULP1 stretch occupies residues 405–740; that stretch reads GHVVAQVQSV…SRRSHDLHTL (336 aa). The C4-type zinc-finger motif lies at 420-443; it reads CCDCREPAPEWASINLGVTLCIQC. Y485 carries the 3'-nitrotyrosine modification. The interval 525–566 is prevents interaction with ITGB1 when S-554 is not phosphorylated; that stretch reads EIRGRRGGRGRPRGQPPVPPKPSIRPRPGSLRSKPEPPSEDL. The tract at residues 525–581 is disordered; sequence EIRGRRGGRGRPRGQPPVPPKPSIRPRPGSLRSKPEPPSEDLGSLHPGALLFRASGH. The segment covering 538–549 has biased composition (pro residues); the sequence is GQPPVPPKPSIR. S554 is subject to Phosphoserine; by PKB. ANK repeat units lie at residues 606-635, 639-668, and 672-702; these read DNAT…NVNQ, AGRG…DLGA, and EGRD…EAEA.

In terms of assembly, banana-shaped homodimer laterally assembling into tetramers, the tetramers further pack helically onto the membrane. Interacts with GTP-bound ARF6. Interacts with third cytoplasmic loop of SLC2A4/GLUT4. Interacts with CLTC. Interacts with GULP1. Forms a complex with GDP-bound ARF6 and GULP1. Interacts with ITGB1; required for ITGB1 recycling. In terms of processing, phosphorylation at Ser-554 by PKB is required for interaction with ITGB1, export of ITGB1 from recycling endosomes to the cell surface and ITGB1-dependent cell migration. As to expression, highest level in lung and spleen. Low level in heart, kidney, liver and pancreas.

It is found in the recycling endosome membrane. With respect to regulation, GAP activity stimulated by phosphatidylinositol 4,5-bisphosphate (PIP2) and phosphatidic acid. Its function is as follows. GTPase-activating protein (GAP) for ADP ribosylation factor 6 (ARF6) required for clathrin-dependent export of proteins from recycling endosomes to trans-Golgi network and cell surface. Required for regulated export of ITGB1 from recycling endosomes to the cell surface and ITGB1-dependent cell migration. The chain is Arf-GAP with coiled-coil, ANK repeat and PH domain-containing protein 1 (ACAP1) from Homo sapiens (Human).